The chain runs to 889 residues: Chitin synthase I (889 aa).

The N-linked (GlcNAc...) asparagine glycan is linked to Asn43. Positions 94 to 138 (GEYFDGYNQGHPPQEHQAYDDDGQPLIEDQHGYSDNPQHQTQTPA) are disordered. Residues 126-137 (YSDNPQHQTQTP) show a composition bias toward polar residues. A glycan (N-linked (GlcNAc...) asparagine) is linked at Asn199. Helical transmembrane passes span 431–451 (SAFGFISVLPGAFSAYRYVAL), 530–550 (RWLNGSFFAAIYAIAHFYEFF), 560–580 (LAFFVEFVFNTINMIFAWFAI), 606–626 (ILGVVFTWLYGVFLMTCFVLS), 641–661 (MVWFWAIIMIYLMFAAIFIAV), 687–707 (TLIISVMSTFGIWLIASIIMF), 716–736 (FIQYMLLTPTYTNVLNVYAFC), 815–835 (GVVLIWMITNFALAALVLSSA), and 861–881 (IVLWSVAVLSGFKFLGAMWFL).

It belongs to the chitin synthase family. Class I subfamily. As to expression, expressed in hyphal bodies.

Its subcellular location is the cell membrane. It carries out the reaction [(1-&gt;4)-N-acetyl-beta-D-glucosaminyl](n) + UDP-N-acetyl-alpha-D-glucosamine = [(1-&gt;4)-N-acetyl-beta-D-glucosaminyl](n+1) + UDP + H(+). Polymerizes chitin, a structural polymer of the cell wall and septum, by transferring the sugar moiety of UDP-GlcNAc to the non-reducing end of the growing chitin polymer. Contributes to the production of conidia and the ability of fungal conidia to germinate. Not involved in fungal stress tolerances. This chain is Chitin synthase I, found in Metarhizium acridum (strain CQMa 102).